We begin with the raw amino-acid sequence, 310 residues long: Methionyl-tRNA formyltransferase (310 aa).

Position 111–114 (111–114) interacts with (6S)-5,6,7,8-tetrahydrofolate; it reads SILP.

Belongs to the Fmt family.

It catalyses the reaction L-methionyl-tRNA(fMet) + (6R)-10-formyltetrahydrofolate = N-formyl-L-methionyl-tRNA(fMet) + (6S)-5,6,7,8-tetrahydrofolate + H(+). Attaches a formyl group to the free amino group of methionyl-tRNA(fMet). The formyl group appears to play a dual role in the initiator identity of N-formylmethionyl-tRNA by promoting its recognition by IF2 and preventing the misappropriation of this tRNA by the elongation apparatus. This chain is Methionyl-tRNA formyltransferase, found in Methylobacterium nodulans (strain LMG 21967 / CNCM I-2342 / ORS 2060).